The following is a 401-amino-acid chain: 8-amino-7-oxononanoate synthase (401 aa).

Arginine 24 contacts substrate. Residue 111-112 coordinates pyridoxal 5'-phosphate; that stretch reads GF. A substrate-binding site is contributed by histidine 137. Pyridoxal 5'-phosphate is bound by residues serine 183, histidine 211, and threonine 240. Lysine 243 carries the post-translational modification N6-(pyridoxal phosphate)lysine. Residue threonine 357 coordinates substrate.

Belongs to the class-II pyridoxal-phosphate-dependent aminotransferase family. BioF subfamily. Homodimer. Pyridoxal 5'-phosphate serves as cofactor.

The enzyme catalyses 6-carboxyhexanoyl-[ACP] + L-alanine + H(+) = (8S)-8-amino-7-oxononanoate + holo-[ACP] + CO2. Its pathway is cofactor biosynthesis; biotin biosynthesis. Its function is as follows. Catalyzes the decarboxylative condensation of pimeloyl-[acyl-carrier protein] and L-alanine to produce 8-amino-7-oxononanoate (AON), [acyl-carrier protein], and carbon dioxide. In Xanthomonas euvesicatoria pv. vesicatoria (strain 85-10) (Xanthomonas campestris pv. vesicatoria), this protein is 8-amino-7-oxononanoate synthase.